Here is a 382-residue protein sequence, read N- to C-terminus: MATATVLEKANIGVYTNTNHDLWVAESKPTLEEVKSGESLKPGEVTVQVRSTGICGSDVHFWHAGCIGPMIVTGDHILGHESAGEVIAVASDVTHLKPGDRVAVEPNIPCHACEPCLTGRYNGCEKVLFLSTPPVDGLLRRYVNHPAVWCHKIGDMSYEDGALLEPLSVSLAAIERSGLRLGDPVLVTGAGPIGLITLLSARAAGATPIVITDIDEGRLAFAKSLVPDVITYKVQTNLSAEDNAAGIIDAFNDGQGSAPDALKPKLALECTGVESSVASAIWSVKFGGKVFVIGVGKNEMKIPFMRLSTQEIDLQYQYRYCNTWPRAIRLVRNGVISLKKLVTHRFLLEDALKAFETAADPKTGAIKVQIMSNEEDVKGASA.

Residues cysteine 55, histidine 80, glutamate 81, cysteine 110, cysteine 113, cysteine 116, cysteine 124, and glutamate 165 each coordinate Zn(2+). NAD(+) contacts are provided by residues 192 to 193, aspartate 213, arginine 218, isoleucine 293, and 317 to 319; these read PI and QYR.

Belongs to the zinc-containing alcohol dehydrogenase family. Homotetramer. The cofactor is Zn(2+).

The catalysed reaction is L-arabinitol + NAD(+) = L-xylulose + NADH + H(+). Its pathway is carbohydrate degradation; L-arabinose degradation via L-arabinitol; D-xylulose 5-phosphate from L-arabinose (fungal route): step 2/5. Its function is as follows. Catalyzes the NAD-dependent oxidation of L-arabinitol to L-xylulose in the fungal L-arabinose catabolic pathway. L-arabinose catabolism is important for using plant material as a carbon source. Also active on ribitol and xylitol. Not active with NADP as cosubstrate. This chain is L-arabinitol 4-dehydrogenase (ladA), found in Aspergillus oryzae (Yellow koji mold).